The chain runs to 950 residues: Coatomer subunit beta-2 (950 aa).

HEAT repeat units lie at residues 92-126 (PEMI…LSEP), 127-164 (EVLE…LPHG), 275-312 (TAVR…TSHR), 313-350 (DVMV…ARNV), and 392-429 (EVAG…TNPK).

In terms of assembly, oligomeric complex that consists of at least the alpha, beta, beta', gamma, delta, epsilon and zeta subunits.

It is found in the cytoplasm. Its subcellular location is the golgi apparatus membrane. It localises to the cytoplasmic vesicle. The protein localises to the COPI-coated vesicle membrane. The coatomer is a cytosolic protein complex that binds to dilysine motifs and reversibly associates with Golgi non-clathrin-coated vesicles, which further mediate biosynthetic protein transport from the ER, via the Golgi up to the trans Golgi network. Coatomer complex is required for budding from Golgi membranes, and is essential for the retrograde Golgi-to-ER transport of dilysine-tagged proteins. This Oryza sativa subsp. japonica (Rice) protein is Coatomer subunit beta-2.